A 371-amino-acid polypeptide reads, in one-letter code: Cytochrome b (371 aa).

The next 4 helical transmembrane spans lie at 25-45 (FGSM…FLAV), 69-90 (WMMQ…YIHI), 105-125 (WMSG…GYVL), and 170-190 (FFAL…LHII). Residues His75 and His89 each coordinate heme b. Heme b contacts are provided by His174 and His188. His193 provides a ligand contact to a ubiquinone. The next 4 helical transmembrane spans lie at 218-238 (HKDL…VSFS), 280-300 (LGGA…PFTH), 312-332 (LSQL…WAAT), and 339-358 (FIII…LSIP).

This sequence belongs to the cytochrome b family. The cytochrome bc1 complex contains 3 respiratory subunits (MT-CYB, CYC1 and UQCRFS1), 2 core proteins (UQCRC1 and UQCRC2) and probably 6 low-molecular weight proteins. The cofactor is heme b.

The protein resides in the mitochondrion inner membrane. Component of the ubiquinol-cytochrome c reductase complex (complex III or cytochrome b-c1 complex) that is part of the mitochondrial respiratory chain. The b-c1 complex mediates electron transfer from ubiquinol to cytochrome c. Contributes to the generation of a proton gradient across the mitochondrial membrane that is then used for ATP synthesis. This Antaresia childreni (Children's python) protein is Cytochrome b (MT-CYB).